A 1005-amino-acid chain; its full sequence is DNA-directed RNA polymerase subunit beta (1005 aa).

This sequence belongs to the RNA polymerase beta chain family. In plastids the minimal PEP RNA polymerase catalytic core is composed of four subunits: alpha, beta, beta', and beta''. When a (nuclear-encoded) sigma factor is associated with the core the holoenzyme is formed, which can initiate transcription (Potential).

The protein resides in the plastid. It is found in the apicoplast. The enzyme catalyses RNA(n) + a ribonucleoside 5'-triphosphate = RNA(n+1) + diphosphate. Functionally, DNA-dependent RNA polymerase catalyzes the transcription of DNA into RNA using the four ribonucleoside triphosphates as substrates. In Theileria parva (East coast fever infection agent), this protein is DNA-directed RNA polymerase subunit beta (rpoB).